A 276-amino-acid chain; its full sequence is MAD2L1-binding protein (276 aa).

Acidic residues predominate over residues 1–10; it reads MAASGEEDMS. The tract at residues 1 to 30 is disordered; the sequence is MAASGEEDMSELSPAAAPNLDWYEKPEETH. Positions 49-81 are interaction with MAD2L1; sequence PAEPFCPRDLVPVVFPGPVSQEDCCQFTCELLK.

Belongs to the MAD2L1BP family. In terms of assembly, interacts with MAD2L1.

It is found in the nucleus. It localises to the nucleoplasm. The protein localises to the cytoplasm. The protein resides in the cytoskeleton. Its subcellular location is the spindle. Functionally, may function to silence the spindle checkpoint and allow mitosis to proceed through anaphase by binding MAD2L1 after it has become dissociated from the MAD2L1-CDC20 complex. This chain is MAD2L1-binding protein (Mad2l1bp), found in Mus musculus (Mouse).